The following is a 140-amino-acid chain: 3-hydroxyacyl-[acyl-carrier-protein] dehydratase FabZ (140 aa).

His47 is an active-site residue.

Belongs to the thioester dehydratase family. FabZ subfamily.

It is found in the cytoplasm. The enzyme catalyses a (3R)-hydroxyacyl-[ACP] = a (2E)-enoyl-[ACP] + H2O. Its function is as follows. Involved in unsaturated fatty acids biosynthesis. Catalyzes the dehydration of short chain beta-hydroxyacyl-ACPs and long chain saturated and unsaturated beta-hydroxyacyl-ACPs. The protein is 3-hydroxyacyl-[acyl-carrier-protein] dehydratase FabZ of Streptococcus suis (strain 98HAH33).